A 267-amino-acid chain; its full sequence is Imidazole glycerol phosphate synthase subunit HisF (267 aa).

Residues D22 and D141 contribute to the active site.

The protein belongs to the HisA/HisF family. Heterodimer of HisH and HisF.

Its subcellular location is the cytoplasm. The enzyme catalyses 5-[(5-phospho-1-deoxy-D-ribulos-1-ylimino)methylamino]-1-(5-phospho-beta-D-ribosyl)imidazole-4-carboxamide + L-glutamine = D-erythro-1-(imidazol-4-yl)glycerol 3-phosphate + 5-amino-1-(5-phospho-beta-D-ribosyl)imidazole-4-carboxamide + L-glutamate + H(+). It participates in amino-acid biosynthesis; L-histidine biosynthesis; L-histidine from 5-phospho-alpha-D-ribose 1-diphosphate: step 5/9. Functionally, IGPS catalyzes the conversion of PRFAR and glutamine to IGP, AICAR and glutamate. The HisF subunit catalyzes the cyclization activity that produces IGP and AICAR from PRFAR using the ammonia provided by the HisH subunit. The polypeptide is Imidazole glycerol phosphate synthase subunit HisF (Mycobacterium tuberculosis (strain ATCC 25177 / H37Ra)).